A 394-amino-acid chain; its full sequence is V-type proton ATPase subunit C (394 aa).

Residue S17 is modified to Phosphoserine.

The protein belongs to the V-ATPase C subunit family. As to quaternary structure, V-ATPase is a heteromultimeric enzyme composed of a peripheral catalytic V1 complex (components A to H) attached to an integral membrane V0 proton pore complex (components: a, c, c', c'', d, e, f and VOA1).

The protein localises to the cytoplasm. Its subcellular location is the vacuole membrane. Its function is as follows. Subunit of the V1 complex of vacuolar(H+)-ATPase (V-ATPase), a multisubunit enzyme composed of a peripheral complex (V1) that hydrolyzes ATP and a membrane integral complex (V0) that translocates protons. V-ATPase is responsible for acidifying and maintaining the pH of intracellular compartments. Subunit C is necessary for the assembly of the catalytic sector of the enzyme and is likely to have a specific function in its catalytic activity. Reversibly leaves the enzyme after glucose depletion, causing the catalytic subcomplex V1 to detach from the V0 section. The sequence is that of V-type proton ATPase subunit C from Schizosaccharomyces pombe (strain 972 / ATCC 24843) (Fission yeast).